A 704-amino-acid chain; its full sequence is Translin-associated factor X-interacting protein 1 (704 aa).

The tract at residues 1-37 (MANLQERKSFSKPRISIQASGGTPEAKGIEKRKLSQK) is disordered. 2 coiled-coil regions span residues 190–230 (EISV…AEEY) and 304–342 (RRDL…LQLH).

In terms of assembly, interacts with TSNAX. In terms of tissue distribution, specifically expressed in testes. Predominantly detected in the post-meiotic stages of germ cells.

It is found in the cytoplasm. Its subcellular location is the perinuclear region. In terms of biological role, possible role in spermatogenesis. This chain is Translin-associated factor X-interacting protein 1, found in Mus musculus (Mouse).